The chain runs to 271 residues: NADH-quinone oxidoreductase subunit B (271 aa).

[4Fe-4S] cluster is bound by residues cysteine 37, cysteine 38, cysteine 103, and cysteine 132. The disordered stretch occupies residues 227 to 271 (LAPPSVFGRAKRIPVDPKPSDEARAHGPGPTTESIGDVDGPDRGI). A compositionally biased stretch (basic and acidic residues) spans 239 to 251 (IPVDPKPSDEARA).

It belongs to the complex I 20 kDa subunit family. As to quaternary structure, NDH-1 is composed of 14 different subunits. Subunits NuoB, C, D, E, F, and G constitute the peripheral sector of the complex. It depends on [4Fe-4S] cluster as a cofactor.

It is found in the cell membrane. It catalyses the reaction a quinone + NADH + 5 H(+)(in) = a quinol + NAD(+) + 4 H(+)(out). In terms of biological role, NDH-1 shuttles electrons from NADH, via FMN and iron-sulfur (Fe-S) centers, to quinones in the respiratory chain. The immediate electron acceptor for the enzyme in this species is believed to be a menaquinone. Couples the redox reaction to proton translocation (for every two electrons transferred, four hydrogen ions are translocated across the cytoplasmic membrane), and thus conserves the redox energy in a proton gradient. This is NADH-quinone oxidoreductase subunit B from Frankia casuarinae (strain DSM 45818 / CECT 9043 / HFP020203 / CcI3).